The sequence spans 386 residues: S-adenosylmethionine synthase (386 aa).

Histidine 16 lines the ATP pocket. Aspartate 18 lines the Mg(2+) pocket. Glutamate 44 provides a ligand contact to K(+). L-methionine contacts are provided by glutamate 57 and glutamine 100. Residues 100 to 110 (QSPDINQGVDR) form a flexible loop region. Residues 164–166 (DGK), 230–231 (KF), aspartate 239, 245–246 (RK), alanine 262, and lysine 266 each bind ATP. Aspartate 239 contributes to the L-methionine binding site. Residue lysine 270 participates in L-methionine binding.

This sequence belongs to the AdoMet synthase family. Homotetramer; dimer of dimers. The cofactor is Mg(2+). It depends on K(+) as a cofactor.

The protein resides in the cytoplasm. It carries out the reaction L-methionine + ATP + H2O = S-adenosyl-L-methionine + phosphate + diphosphate. It participates in amino-acid biosynthesis; S-adenosyl-L-methionine biosynthesis; S-adenosyl-L-methionine from L-methionine: step 1/1. Its function is as follows. Catalyzes the formation of S-adenosylmethionine (AdoMet) from methionine and ATP. The overall synthetic reaction is composed of two sequential steps, AdoMet formation and the subsequent tripolyphosphate hydrolysis which occurs prior to release of AdoMet from the enzyme. This is S-adenosylmethionine synthase from Wolinella succinogenes (strain ATCC 29543 / DSM 1740 / CCUG 13145 / JCM 31913 / LMG 7466 / NCTC 11488 / FDC 602W) (Vibrio succinogenes).